The chain runs to 148 residues: Globin, monomeric component M-IV (148 aa).

The Globin domain maps to 2-147 (GLSAAQRQVV…ISGALISGLQ (146 aa)). Residue histidine 91 coordinates heme b.

As to quaternary structure, monomer.

The protein is Globin, monomeric component M-IV of Glycera dibranchiata (Bloodworm).